The chain runs to 344 residues: MIPLVSIIVPMYNVEPFIEECIDSLLRQTLSDIEIILVNDGTPDRSGEIAEDYAKRDARIRVIHQANGGLSSARNTGIKAARGTYIGFVDGDDYVSSAMFQRLTEEAEQNQLDIVGCGFYKQSSDRRTYVPPQLEANRVLTKPEMTEQLKHAHETRFIWYVWRYLYRRELFERANLLFDEDIRFAEDSPFNLSAFREAERVKMLDEGLYIYRENPNSLTEIPYKPAMDEHLQKQYQAKIAFYNHYGLAGACKEDLNVYICRHQLPMLLANACASPNSPKDIKKKIRQILSYDMVRQAVRHTPFQHEKLLRGERLVLALCKWRLTFLIKLFFEQRGTMKGSAKQA.

This sequence belongs to the glycosyltransferase 2 family.

May be involved in the production of the exopolysaccharide (EPS) component of the extracellular matrix during biofilm formation. EPS is responsible for the adhesion of chains of cells into bundles. This is an uncharacterized protein from Bacillus subtilis (strain 168).